A 597-amino-acid polypeptide reads, in one-letter code: MAQAWAFLLPVLVFGSYMTSLFFPTYISGPLCGGDGGGRSLFLCAQAPKDQDPSPAVSTMYKTAFHFQPAKNWMNDPSGPMYFNGFYHEFYQYNPNGPIFGDIVWGHSVSTDLVNWIGLEPALVRDTPSDIDGCWTGSVTILPGGKPVIIYTGGDKDQHQAQNIAFPKNRSDPYLREWIKAANNPVLRPDEPGMNSIEFRDPTTGWIGPDGLWRMAVGGELNGYSAALLYKSEDFLNWTKVDHPLYSHNGSNMWECPDFFAVLPGNNAGLDLSAAIPQGAKHALKMSVDSVDKYMIGVYDLQRDAFVPDNVVDDRRLWLRIDYGTFYASKSFFDSNKNRRIIWGWSRETDSPSDDLEKGWAGLHTIPRTIWLADDGKQLLQWPVEEIESLRTNEISHQGIELNKGDLFEIKEVDAFQADVEIGFELASIDDADPFDPSWLLDPEKHCGEAGASVPGGIGPFGLVILASDNMDEHTEVYFRVYKSEEKYMVLMCSDLRRSSLRPDLEKPAYGGFFEFDLEKERKISLRTLIDRSAVESFGGGGRVCITSRVYPAVLADVGRAHIYAFNNGSATVRVPQLSAWTMRKAQVNVEKGWSAI.

The signal sequence occupies residues 1–15 (MAQAWAFLLPVLVFG). The active site involves aspartate 76. N-linked (GlcNAc...) asparagine glycosylation is found at asparagine 169, asparagine 237, and asparagine 249. Cysteines 447 and 493 form a disulfide. N-linked (GlcNAc...) asparagine glycosylation is present at asparagine 568.

It belongs to the glycosyl hydrolase 32 family.

The catalysed reaction is Hydrolysis of terminal, non-reducing (2-&gt;1)-linked beta-D-fructofuranose residues in fructans.. Its activity is regulated as follows. Inhibited by sucrose. Its function is as follows. Hydrolyzes inulin-type beta-(2,1)-fructans. May play a role as a beta-(2,1)-trimmer during graminan biosynthesis. The sequence is that of Fructan 1-exohydrolase from Triticum urartu (Red wild einkorn).